Consider the following 273-residue polypeptide: Dermonecrotic toxin LapSicTox-alphaIB1aiii (273 aa).

His5 is a catalytic residue. Mg(2+) is bound by residues Glu25 and Asp27. His41 (nucleophile) is an active-site residue. Cystine bridges form between Cys45-Cys51 and Cys47-Cys190. Residue Asp85 coordinates Mg(2+). An N-linked (GlcNAc...) asparagine glycan is attached at Asn250.

This sequence belongs to the arthropod phospholipase D family. Class II subfamily. Mg(2+) is required as a cofactor. In terms of tissue distribution, expressed by the venom gland.

It is found in the secreted. It carries out the reaction an N-(acyl)-sphingosylphosphocholine = an N-(acyl)-sphingosyl-1,3-cyclic phosphate + choline. The catalysed reaction is an N-(acyl)-sphingosylphosphoethanolamine = an N-(acyl)-sphingosyl-1,3-cyclic phosphate + ethanolamine. The enzyme catalyses a 1-acyl-sn-glycero-3-phosphocholine = a 1-acyl-sn-glycero-2,3-cyclic phosphate + choline. It catalyses the reaction a 1-acyl-sn-glycero-3-phosphoethanolamine = a 1-acyl-sn-glycero-2,3-cyclic phosphate + ethanolamine. Dermonecrotic toxins cleave the phosphodiester linkage between the phosphate and headgroup of certain phospholipids (sphingolipid and lysolipid substrates), forming an alcohol (often choline) and a cyclic phosphate. This toxin acts on sphingomyelin (SM). It may also act on ceramide phosphoethanolamine (CPE), lysophosphatidylcholine (LPC) and lysophosphatidylethanolamine (LPE), but not on lysophosphatidylserine (LPS), and lysophosphatidylglycerol (LPG). It acts by transphosphatidylation, releasing exclusively cyclic phosphate products as second products. Induces dermonecrosis, hemolysis, increased vascular permeability, edema, inflammatory response, and platelet aggregation. The protein is Dermonecrotic toxin LapSicTox-alphaIB1aiii of Loxosceles apachea (Apache recluse spider).